A 444-amino-acid polypeptide reads, in one-letter code: Trigger factor (444 aa).

The 86-residue stretch at 165-250 folds into the PPIase FKBP-type domain; the sequence is GDFAKFDFEG…LHEIQELKIP (86 aa).

This sequence belongs to the FKBP-type PPIase family. Tig subfamily.

Its subcellular location is the cytoplasm. It catalyses the reaction [protein]-peptidylproline (omega=180) = [protein]-peptidylproline (omega=0). Functionally, involved in protein export. Acts as a chaperone by maintaining the newly synthesized protein in an open conformation. Functions as a peptidyl-prolyl cis-trans isomerase. This is Trigger factor from Campylobacter jejuni subsp. jejuni serotype O:6 (strain 81116 / NCTC 11828).